Here is a 205-residue protein sequence, read N- to C-terminus: Large ribosomal subunit protein bL25 (205 aa).

The protein belongs to the bacterial ribosomal protein bL25 family. CTC subfamily. In terms of assembly, part of the 50S ribosomal subunit; part of the 5S rRNA/L5/L18/L25 subcomplex. Contacts the 5S rRNA. Binds to the 5S rRNA independently of L5 and L18.

In terms of biological role, this is one of the proteins that binds to the 5S RNA in the ribosome where it forms part of the central protuberance. This is Large ribosomal subunit protein bL25 from Bartonella bacilliformis (strain ATCC 35685 / KC583 / Herrer 020/F12,63).